Here is a 214-residue protein sequence, read N- to C-terminus: Probable adenylyl-sulfate kinase (214 aa).

13–20 serves as a coordination point for ATP; that stretch reads GLSGAGKT. The Phosphoserine intermediate role is filled by S87. Residues 174-199 form a disordered region; it reads WNRTNTFPLKSRPNPPHRHKSKSSRA.

The protein belongs to the APS kinase family.

It carries out the reaction adenosine 5'-phosphosulfate + ATP = 3'-phosphoadenylyl sulfate + ADP + H(+). The protein operates within sulfur metabolism; hydrogen sulfide biosynthesis; sulfite from sulfate: step 2/3. Its function is as follows. Catalyzes the synthesis of activated sulfate. The sequence is that of Probable adenylyl-sulfate kinase from Pseudomonas aeruginosa.